Here is a 312-residue protein sequence, read N- to C-terminus: Protein phosphatase 2A catalytic subunit B (312 aa).

Mn(2+) contacts are provided by aspartate 55, histidine 57, aspartate 83, and asparagine 115. Catalysis depends on histidine 116, which acts as the Proton donor. Residues histidine 165 and histidine 240 each coordinate Mn(2+).

The protein belongs to the PPP phosphatase family. PP-2A subfamily. In terms of assembly, component of the Sca1 complex composed of at least gefA, gefH, scaA, phr, and the protein phosphatase 2A subunits pppA and pho2B. Requires Mn(2+) as cofactor.

The protein localises to the cell membrane. It catalyses the reaction O-phospho-L-seryl-[protein] + H2O = L-seryl-[protein] + phosphate. The enzyme catalyses O-phospho-L-threonyl-[protein] + H2O = L-threonyl-[protein] + phosphate. Component of the Sca1 complex, a regulator of cell motility, chemotaxis and signal relay. The Sca1 complex is recruited to the plasma membrane in a chemoattractant- and F-actin-dependent manner and is enriched at the leading edge of chemotaxing cells where it regulates F-actin dynamics and signal relay by controlling the activation of rasC and the downstream target of rapamycin complex 2 (TORC2)-Akt/protein kinase B (PKB) pathway. This Dictyostelium discoideum (Social amoeba) protein is Protein phosphatase 2A catalytic subunit B.